An 88-amino-acid polypeptide reads, in one-letter code: Protein MATERNALLY EXPRESSED GENE 1 (88 aa).

An N-terminal signal peptide occupies residues Met-1–Gly-27. Asn-36 is a glycosylation site (N-linked (GlcNAc...) asparagine). Intrachain disulfides connect Cys-65–Cys-87 and Cys-68–Cys-76.

The protein belongs to the MEG family. Post-translationally, glycosylated. In terms of tissue distribution, expressed exclusively in endosperm. Found in basal endosperm transfer cells.

It is found in the secreted. The protein localises to the cell wall. The protein resides in the cell membrane. Its subcellular location is the extracellular space. It localises to the extracellular matrix. In terms of biological role, regulates maternal nutrient uptake, sucrose partitioning, and seed biomass yield. Necessary and sufficient for the establishment and differentiation of the endosperm nutrient transfer cells located at the mother:seed interface. Exclusive expression of the maternal allele at the early stages of endosperm development. The maternal allele is hypomethylated. At later stages, expression becomes biallelic. Regulated by the transcription factor MRP1. In Zea mays (Maize), this protein is Protein MATERNALLY EXPRESSED GENE 1 (MEG1).